A 261-amino-acid polypeptide reads, in one-letter code: ATP synthase subunit a (261 aa).

The next 6 membrane-spanning stretches (helical) occupy residues 45 to 65 (ITNVTMWMAIAVLVIAAILVL), 107 to 127 (VMTLFLFVLCGNVLGLLPLSF), 133 to 153 (MAVTVPLALMVFVGVTALGFM), 162 to 182 (MFWVTSAPLAIRPVLAVIEVI), 209 to 229 (IAGFASIAVVSPVVVGAVTAI), and 232 to 252 (LELLVAVVQAYVFTILTCVYL).

It belongs to the ATPase A chain family. F-type ATPases have 2 components, CF(1) - the catalytic core - and CF(0) - the membrane proton channel. CF(1) has five subunits: alpha(3), beta(3), gamma(1), delta(1), epsilon(1). CF(0) has four main subunits: a, b, b' and c.

The protein resides in the cell inner membrane. Key component of the proton channel; it plays a direct role in the translocation of protons across the membrane. The chain is ATP synthase subunit a from Cereibacter sphaeroides (strain ATCC 17025 / ATH 2.4.3) (Rhodobacter sphaeroides).